The following is a 119-amino-acid chain: Large ribosomal subunit protein uL18 (119 aa).

It belongs to the universal ribosomal protein uL18 family. Part of the 50S ribosomal subunit; part of the 5S rRNA/L5/L18/L25 subcomplex. Contacts the 5S and 23S rRNAs.

Functionally, this is one of the proteins that bind and probably mediate the attachment of the 5S RNA into the large ribosomal subunit, where it forms part of the central protuberance. The polypeptide is Large ribosomal subunit protein uL18 (Jannaschia sp. (strain CCS1)).